We begin with the raw amino-acid sequence, 456 residues long: DEAD-box ATP-dependent RNA helicase 10 (456 aa).

A Q motif motif is present at residues 9-37 (KTFAELGVREELVKACERLGWKNPSKIQA). The Helicase ATP-binding domain occupies 40 to 223 (LPFALEGKDV…RACLRNPVKI (184 aa)). 53–60 (AQTGSGKT) lines the ATP pocket. Residues 171–174 (DEAD) carry the DEAD box motif. One can recognise a Helicase C-terminal domain in the interval 250–394 (YLVYILSEMP…EYPAEEDEVL (145 aa)). The disordered stretch occupies residues 407–456 (SAMNMKESGGRKRRGEDDEESERFLGGNKDRGNKERGGNKDKKSSKKFKR). Positions 434–448 (NKDRGNKERGGNKDK) are enriched in basic and acidic residues.

This sequence belongs to the DEAD box helicase family. DDX47/RRP3 subfamily. As to expression, expressed in all tissues and organs examined including root, cotyledon, first and second leaves, third and fourth leaves, fifth and sixth leaves, shoot apex, flower, flower bud, cauline leaf and rosette leaves.

The protein localises to the nucleus. It localises to the nucleolus. The enzyme catalyses ATP + H2O = ADP + phosphate + H(+). In terms of biological role, involved in leaf polarity establishment by functioning cooperatively with AS2 to repress abaxial genes ARF3, ARF4, KAN1, KAN2, YAB1 and YAB5, and the knox homeobox genes KNAT1, KNAT2, KNAT6, and STM to promote adaxial development in leaf primordia at shoot apical meristems at high temperatures. Involved in the processing of pre-rRNA intermediates at high temperatures. This Arabidopsis thaliana (Mouse-ear cress) protein is DEAD-box ATP-dependent RNA helicase 10 (RH10).